We begin with the raw amino-acid sequence, 548 residues long: Phenylalanine--tRNA ligase beta subunit (548 aa).

In terms of domain architecture, B5 spans 271 to 346 (LSEAAAKLDP…ISIGYEALGP (76 aa)). Positions 324, 330, 333, and 334 each coordinate Mg(2+).

The protein belongs to the phenylalanyl-tRNA synthetase beta subunit family. Type 2 subfamily. Tetramer of two alpha and two beta subunits. Requires Mg(2+) as cofactor.

It localises to the cytoplasm. It carries out the reaction tRNA(Phe) + L-phenylalanine + ATP = L-phenylalanyl-tRNA(Phe) + AMP + diphosphate + H(+). This chain is Phenylalanine--tRNA ligase beta subunit, found in Aeropyrum pernix (strain ATCC 700893 / DSM 11879 / JCM 9820 / NBRC 100138 / K1).